A 554-amino-acid chain; its full sequence is Kinesin-like protein 3 (554 aa).

Residues 3–325 (SIKVVCRIRP…LRFGHRAKSI (323 aa)) enclose the Kinesin motor domain. Residues 84–91 (GQTGSGKT) and 233–240 (GSESVGKS) each bind ATP. Residues 446–473 (LSSTKQQLSDLMTALGDAQERYVELVKN) adopt a coiled-coil conformation.

It belongs to the TRAFAC class myosin-kinesin ATPase superfamily. Kinesin family.

Its subcellular location is the cytoplasm. It is found in the cytoskeleton. Its function is as follows. Cytoplasmic motor that could play a role in Golgi membrane recycling. The protein is Kinesin-like protein 3 (klp3) of Schizosaccharomyces pombe (strain 972 / ATCC 24843) (Fission yeast).